Consider the following 368-residue polypeptide: Phospho-N-acetylmuramoyl-pentapeptide-transferase (368 aa).

The next 10 helical transmembrane spans lie at 2–22, 51–71, 80–100, 116–136, 166–186, 193–213, 234–254, 256–276, 277–297, and 340–360; these read IALI…TPLL, TLGG…SALY, PTWA…LGFI, VGGK…LALI, IVAI…WTNA, LDGL…IIAM, PLDL…FLWY, CNPA…GLFA, ALSI…LFVV, and FWIV…GNWV.

The protein belongs to the glycosyltransferase 4 family. MraY subfamily. It depends on Mg(2+) as a cofactor.

The protein resides in the cell membrane. The catalysed reaction is UDP-N-acetyl-alpha-D-muramoyl-L-alanyl-gamma-D-glutamyl-meso-2,6-diaminopimeloyl-D-alanyl-D-alanine + di-trans,octa-cis-undecaprenyl phosphate = di-trans,octa-cis-undecaprenyl diphospho-N-acetyl-alpha-D-muramoyl-L-alanyl-D-glutamyl-meso-2,6-diaminopimeloyl-D-alanyl-D-alanine + UMP. It functions in the pathway cell wall biogenesis; peptidoglycan biosynthesis. Its function is as follows. Catalyzes the initial step of the lipid cycle reactions in the biosynthesis of the cell wall peptidoglycan: transfers peptidoglycan precursor phospho-MurNAc-pentapeptide from UDP-MurNAc-pentapeptide onto the lipid carrier undecaprenyl phosphate, yielding undecaprenyl-pyrophosphoryl-MurNAc-pentapeptide, known as lipid I. The protein is Phospho-N-acetylmuramoyl-pentapeptide-transferase of Bifidobacterium animalis subsp. lactis (strain AD011).